We begin with the raw amino-acid sequence, 359 residues long: 4-hydroxy-3-methylbut-2-en-1-yl diphosphate synthase (flavodoxin) (359 aa).

Residues Cys-264, Cys-267, Cys-299, and Glu-306 each contribute to the [4Fe-4S] cluster site.

This sequence belongs to the IspG family. [4Fe-4S] cluster is required as a cofactor.

It carries out the reaction (2E)-4-hydroxy-3-methylbut-2-enyl diphosphate + oxidized [flavodoxin] + H2O + 2 H(+) = 2-C-methyl-D-erythritol 2,4-cyclic diphosphate + reduced [flavodoxin]. The protein operates within isoprenoid biosynthesis; isopentenyl diphosphate biosynthesis via DXP pathway; isopentenyl diphosphate from 1-deoxy-D-xylulose 5-phosphate: step 5/6. In terms of biological role, converts 2C-methyl-D-erythritol 2,4-cyclodiphosphate (ME-2,4cPP) into 1-hydroxy-2-methyl-2-(E)-butenyl 4-diphosphate. This is 4-hydroxy-3-methylbut-2-en-1-yl diphosphate synthase (flavodoxin) from Helicobacter pylori (strain HPAG1).